The sequence spans 103 residues: Co-chaperonin GroES (103 aa).

This sequence belongs to the GroES chaperonin family. Heptamer of 7 subunits arranged in a ring. Interacts with the chaperonin GroEL.

It is found in the cytoplasm. In terms of biological role, together with the chaperonin GroEL, plays an essential role in assisting protein folding. The GroEL-GroES system forms a nano-cage that allows encapsulation of the non-native substrate proteins and provides a physical environment optimized to promote and accelerate protein folding. GroES binds to the apical surface of the GroEL ring, thereby capping the opening of the GroEL channel. The sequence is that of Co-chaperonin GroES from Gloeothece citriformis (strain PCC 7424) (Cyanothece sp. (strain PCC 7424)).